Here is a 268-residue protein sequence, read N- to C-terminus: Lipase 1 (268 aa).

The first 29 residues, 1–29 (MRRFRLVGFLSSLVLAAGAALTGAATAQA), serve as a signal peptide directing secretion. Catalysis depends on serine 44, which acts as the Nucleophile. 3 disulfides stabilise this stretch: cysteine 61-cysteine 86, cysteine 127-cysteine 135, and cysteine 185-cysteine 231. Histidine 250 is a catalytic residue.

The protein belongs to the 'GDSL' lipolytic enzyme family. Monomer.

It localises to the secreted. It catalyses the reaction a triacylglycerol + H2O = a diacylglycerol + a fatty acid + H(+). Strongly inhibited by Ag(+). The cations Ca(2+), Mg(2+), Co(2+) and Cu(2+) do not significantly reduce the lipolytic activity of SCO1725. Is also inhibited by DTT in vitro, but not by EDTA or by the reagent masking SH-groups, p-hydroxymercuribenzoate (pHMB). Is resistant to PMSF inhibition, except in the presence of Ca(2+). Is also strongly inhibited by 3,4-dichloroisocoumarin (DCI), another inhibitor of serine hydrolases. Addition of tetrahydrofuran and 1,4-dioxane significantly increases (2- and 4- fold, respectively) hydrolytic activity of lipase towards p-nitrophenyl caprylate. In terms of biological role, catalyzes the hydrolysis of fatty acid esters with a preference for mid-length acyl chain (C10-C16). Is able to hydrolyze the triacylglycerol triolein and mixed triacylglycerols from a wide range of natural oils; better activity is obtained with corn-, wheat germ- and olive oil that have higher content of linoleic and/or oleic acid (C18:2; C18:1, cis). Tween detergents are also substrates for this enzyme. Displays arylesterase activity towards p-nitrophenyl alkanoate esters and alpha- and beta-naphthyl esters. In Streptomyces coelicolor (strain ATCC BAA-471 / A3(2) / M145), this protein is Lipase 1.